Here is a 296-residue protein sequence, read N- to C-terminus: Dof zinc finger protein DOF3.7 (296 aa).

The segment at 41-69 (NTRPNATASNGGSGGNTNNTATMETRKAR) is disordered. Residues 45–62 (NATASNGGSGGNTNNTAT) show a composition bias toward low complexity. The segment at 74–128 (VNCPRCNSTNTKFCYYNNYSLTQPRYFCKGCRRYWTEGGSLRNVPVGGSSRKNKR) adopts a Dof-type zinc-finger fold. Cys76, Cys79, Cys101, and Cys104 together coordinate Zn(2+). A disordered region spans residues 115-146 (RNVPVGGSSRKNKRSSTPLASPSNPKLPDLNP). The segment covering 129-138 (SSTPLASPSN) has biased composition (polar residues).

Expressed in the phloem of the mother plant, including in roots, stem, leaves and flowers, but not present in the seed and embryo. In maturing siliques, found all through the funiculus connecting the placenta to the ovule, but not in the ovule.

The protein resides in the nucleus. Transcription factor specifically involved in the maternal control of seed germination. Regulates transcription by binding to a 5'-AA[AG]G-3' consensus core sequence. May ensure the inactivity of a component that would be activated to trigger germination as a consequence of red light perception. The sequence is that of Dof zinc finger protein DOF3.7 (DOF3.7) from Arabidopsis thaliana (Mouse-ear cress).